We begin with the raw amino-acid sequence, 612 residues long: Indole-3-acetic acid-amido synthetase GH3.5 (612 aa).

This sequence belongs to the IAA-amido conjugating enzyme family.

In terms of biological role, catalyzes the synthesis of indole-3-acetic acid (IAA)-amino acid conjugates, providing a mechanism for the plant to cope with the presence of excess auxin. Strongly reactive with Glu, Gln, Trp, Asp, Ala, Leu, Phe, Gly, Tyr, Met, Ile and Val. Little or no product formation with His, Ser, Thr, Arg, Lys, or Cys. Also active on pyruvic and butyric acid analogs of IAA, PAA and the synthetic auxin naphthaleneacetic acid (NAA). The two chlorinated synthetic auxin herbicides 2,4-D and 3,6-dichloro-o-anisic acid (dicamba) cannot be used as substrates. This Arabidopsis thaliana (Mouse-ear cress) protein is Indole-3-acetic acid-amido synthetase GH3.5 (GH3.5).